We begin with the raw amino-acid sequence, 144 residues long: Urease subunit beta (144 aa).

Residues 110 to 119 show a composition bias toward low complexity; sequence HAAPAAPAIP. Residues 110 to 144 are disordered; the sequence is HAAPAAPAIPARHESAAGDAPSPLKERAGFDNETR. Positions 133–144 are enriched in basic and acidic residues; that stretch reads LKERAGFDNETR.

This sequence belongs to the urease beta subunit family. As to quaternary structure, heterotrimer of UreA (gamma), UreB (beta) and UreC (alpha) subunits. Three heterotrimers associate to form the active enzyme.

It localises to the cytoplasm. The catalysed reaction is urea + 2 H2O + H(+) = hydrogencarbonate + 2 NH4(+). It participates in nitrogen metabolism; urea degradation; CO(2) and NH(3) from urea (urease route): step 1/1. This Micrococcus luteus (strain ATCC 4698 / DSM 20030 / JCM 1464 / CCM 169 / CCUG 5858 / IAM 1056 / NBRC 3333 / NCIMB 9278 / NCTC 2665 / VKM Ac-2230) (Micrococcus lysodeikticus) protein is Urease subunit beta.